A 464-amino-acid chain; its full sequence is Kynureninase (464 aa).

An N-acetylmethionine modification is found at methionine 1. Residues leucine 137, threonine 138, 165-168 (FPSD), serine 221, aspartate 250, histidine 253, and tyrosine 275 each bind pyridoxal 5'-phosphate. Lysine 276 is modified (N6-(pyridoxal phosphate)lysine). Positions 305 and 333 each coordinate pyridoxal 5'-phosphate.

This sequence belongs to the kynureninase family. Homodimer. Requires pyridoxal 5'-phosphate as cofactor.

The protein localises to the cytoplasm. It is found in the cytosol. It carries out the reaction L-kynurenine + H2O = anthranilate + L-alanine + H(+). The enzyme catalyses 3-hydroxy-L-kynurenine + H2O = 3-hydroxyanthranilate + L-alanine + H(+). It participates in amino-acid degradation; L-kynurenine degradation; L-alanine and anthranilate from L-kynurenine: step 1/1. Its pathway is cofactor biosynthesis; NAD(+) biosynthesis; quinolinate from L-kynurenine: step 2/3. In terms of biological role, catalyzes the cleavage of L-kynurenine (L-Kyn) and L-3-hydroxykynurenine (L-3OHKyn) into anthranilic acid (AA) and 3-hydroxyanthranilic acid (3-OHAA), respectively. Has a preference for the L-3-hydroxy form. Also has cysteine-conjugate-beta-lyase activity. This chain is Kynureninase (Kynu), found in Mus musculus (Mouse).